The chain runs to 356 residues: tRNA N6-adenosine threonylcarbamoyltransferase (356 aa).

3 residues coordinate a divalent metal cation: histidine 124, histidine 128, and tyrosine 145. Substrate contacts are provided by residues 145–149, aspartate 177, glycine 192, glutamate 196, and asparagine 287; that span reads YVSGG. Aspartate 315 is a binding site for a divalent metal cation.

Belongs to the KAE1 / TsaD family. Component of the EKC/KEOPS complex composed of at least BUD32, CGI121, GON7, KAE1 and PCC1; the whole complex dimerizes. The cofactor is a divalent metal cation.

Its subcellular location is the cytoplasm. It localises to the nucleus. It carries out the reaction L-threonylcarbamoyladenylate + adenosine(37) in tRNA = N(6)-L-threonylcarbamoyladenosine(37) in tRNA + AMP + H(+). In terms of biological role, component of the EKC/KEOPS complex that is required for the formation of a threonylcarbamoyl group on adenosine at position 37 (t(6)A37) in tRNAs that read codons beginning with adenine. The complex is probably involved in the transfer of the threonylcarbamoyl moiety of threonylcarbamoyl-AMP (TC-AMP) to the N6 group of A37. KAE1 likely plays a direct catalytic role in this reaction, but requires other protein(s) of the complex to fulfill this activity. The EKC/KEOPS complex also promotes both telomere uncapping and telomere elongation. The complex is required for efficient recruitment of transcriptional coactivators. The chain is tRNA N6-adenosine threonylcarbamoyltransferase from Yarrowia lipolytica (strain CLIB 122 / E 150) (Yeast).